The following is a 199-amino-acid chain: Guanylyl cyclase-activating protein 1 (199 aa).

Glycine 2 carries the N-myristoyl glycine lipid modification. A Deamidated asparagine modification is found at asparagine 3. 4 EF-hand domains span residues 13–48, 50–85, 86–121, and 129–164; these read SATE…KNLS, SANK…VLKG, KVDQ…IRAI, and TAEE…DEVL. Residues aspartate 63, asparagine 65, aspartate 67, tyrosine 69, glutamate 74, aspartate 99, aspartate 101, asparagine 103, cysteine 105, glutamate 110, aspartate 142, asparagine 144, aspartate 146, glutamate 148, and glutamate 153 each coordinate Ca(2+).

Retina, in rod and cone outer segments, and pineal gland.

In terms of biological role, stimulates retinal guanylyl cyclase when free calcium ions concentration is low and inhibits guanylyl cyclase when free calcium ions concentration is elevated. This Ca(2+)-sensitive regulation of retinal guanylyl cyclase is a key event in recovery of the dark state of rod photoreceptors following light exposure. The polypeptide is Guanylyl cyclase-activating protein 1 (GUCA1A) (Gallus gallus (Chicken)).